Reading from the N-terminus, the 96-residue chain is Co-chaperonin GroES (96 aa).

This sequence belongs to the GroES chaperonin family. As to quaternary structure, heptamer of 7 subunits arranged in a ring. Interacts with the chaperonin GroEL.

It localises to the cytoplasm. Its function is as follows. Together with the chaperonin GroEL, plays an essential role in assisting protein folding. The GroEL-GroES system forms a nano-cage that allows encapsulation of the non-native substrate proteins and provides a physical environment optimized to promote and accelerate protein folding. GroES binds to the apical surface of the GroEL ring, thereby capping the opening of the GroEL channel. The chain is Co-chaperonin GroES from Trichlorobacter lovleyi (strain ATCC BAA-1151 / DSM 17278 / SZ) (Geobacter lovleyi).